Here is a 475-residue protein sequence, read N- to C-terminus: Protein FIZZY-RELATED 1 (475 aa).

Positions 1–27 are disordered; that stretch reads MEEDESTTPKKKSDSQLNLPPSMNRPT. A compositionally biased stretch (polar residues) spans 15-27; sequence SQLNLPPSMNRPT. 7 WD repeats span residues 166 to 203, 207 to 246, 249 to 289, 290 to 329, 332 to 374, 376 to 417, and 420 to 459; these read QDDF…VTKL, GVDE…NIRT, GHRL…SKLK, GHKS…PVLR, EHAA…HLNC, DTNS…KLAT, and GHSY…KSQS.

Belongs to the WD repeat CDC20/Fizzy family. As to quaternary structure, associates with the APC/C complex. Interacts with CDC20-1, CDC20-2, CYCA1-1, CYCA1-2, CYCA3-4, CYCB1-1 and CYCB1-2. Binds to GIG1. Expressed in the root tip, predominantly in the root cap, quiescent center cells, surrounding stem cells and columella.

It localises to the nucleus. It participates in protein modification; protein ubiquitination. Functionally, activator protein that regulates the ubiquitin ligase activity and substrate specificity of the anaphase promoting complex/cyclosome (APC/C). Required for meristem organization and maintenance of quiescent center identity and stem cells. The polypeptide is Protein FIZZY-RELATED 1 (FZR1) (Arabidopsis thaliana (Mouse-ear cress)).